A 124-amino-acid chain; its full sequence is Small ribosomal subunit protein uS13 (124 aa).

Residues 94-124 (KGLPVRGQRTKTNARTRKGPKRTVAGKKKAR) form a disordered region.

This sequence belongs to the universal ribosomal protein uS13 family. In terms of assembly, part of the 30S ribosomal subunit. Forms a loose heterodimer with protein S19. Forms two bridges to the 50S subunit in the 70S ribosome.

Located at the top of the head of the 30S subunit, it contacts several helices of the 16S rRNA. In the 70S ribosome it contacts the 23S rRNA (bridge B1a) and protein L5 of the 50S subunit (bridge B1b), connecting the 2 subunits; these bridges are implicated in subunit movement. Contacts the tRNAs in the A and P-sites. The protein is Small ribosomal subunit protein uS13 of Pseudarthrobacter chlorophenolicus (strain ATCC 700700 / DSM 12829 / CIP 107037 / JCM 12360 / KCTC 9906 / NCIMB 13794 / A6) (Arthrobacter chlorophenolicus).